Reading from the N-terminus, the 377-residue chain is Methylthioribose-1-phosphate isomerase (377 aa).

Residue aspartate 254 is the Proton donor of the active site.

This sequence belongs to the eIF-2B alpha/beta/delta subunits family. MtnA subfamily.

Its subcellular location is the cytoplasm. The protein localises to the nucleus. It catalyses the reaction 5-(methylsulfanyl)-alpha-D-ribose 1-phosphate = 5-(methylsulfanyl)-D-ribulose 1-phosphate. Its pathway is amino-acid biosynthesis; L-methionine biosynthesis via salvage pathway; L-methionine from S-methyl-5-thio-alpha-D-ribose 1-phosphate: step 1/6. Functionally, catalyzes the interconversion of methylthioribose-1-phosphate (MTR-1-P) into methylthioribulose-1-phosphate (MTRu-1-P). In Aspergillus terreus (strain NIH 2624 / FGSC A1156), this protein is Methylthioribose-1-phosphate isomerase (mri1).